We begin with the raw amino-acid sequence, 267 residues long: uncharacterized protein (267 aa).

Residues 30-52 (FMRIFLLFLFFVLFTFGVEGYVI) form a helical membrane-spanning segment.

It localises to the membrane. This is an uncharacterized protein from Aquifex aeolicus (strain VF5).